The sequence spans 126 residues: Protein ApaG (126 aa).

Positions 2 to 126 (DVSQPRIQIQ…FRLAVPNILN (125 aa)) constitute an ApaG domain.

In Vibrio vulnificus (strain CMCP6), this protein is Protein ApaG.